The sequence spans 78 residues: Acyl carrier protein (78 aa).

Residues S2 to Q77 form the Carrier domain. The residue at position 37 (S37) is an O-(pantetheine 4'-phosphoryl)serine.

Belongs to the acyl carrier protein (ACP) family. Post-translationally, 4'-phosphopantetheine is transferred from CoA to a specific serine of apo-ACP by AcpS. This modification is essential for activity because fatty acids are bound in thioester linkage to the sulfhydryl of the prosthetic group.

Its subcellular location is the cytoplasm. It functions in the pathway lipid metabolism; fatty acid biosynthesis. Functionally, carrier of the growing fatty acid chain in fatty acid biosynthesis. The sequence is that of Acyl carrier protein from Rhizobium etli (strain CIAT 652).